We begin with the raw amino-acid sequence, 118 residues long: Holo-[acyl-carrier-protein] synthase (118 aa).

Mg(2+)-binding residues include Asp-6 and Glu-55.

It belongs to the P-Pant transferase superfamily. AcpS family. It depends on Mg(2+) as a cofactor.

It localises to the cytoplasm. The enzyme catalyses apo-[ACP] + CoA = holo-[ACP] + adenosine 3',5'-bisphosphate + H(+). Its function is as follows. Transfers the 4'-phosphopantetheine moiety from coenzyme A to a Ser of acyl-carrier-protein. The sequence is that of Holo-[acyl-carrier-protein] synthase from Chlorobium chlorochromatii (strain CaD3).